The following is a 317-amino-acid chain: Glucokinase (317 aa).

6-12 is a binding site for ATP; that stretch reads GVDIGGT.

Belongs to the ROK (NagC/XylR) family. Homooligomer (possibly a homotetramer). Alternatively, it may form a heterotetramer of two glucokinase subunits with two ORF2 (AC P40182) proteins.

It is found in the cytoplasm. It carries out the reaction D-glucose + ATP = D-glucose 6-phosphate + ADP + H(+). Its function is as follows. A probable glucose kinase. Required for glucose repression of many different genes, restores glucose kinase activity in E.coli glk mutants. This is Glucokinase (glkA) from Streptomyces coelicolor (strain ATCC BAA-471 / A3(2) / M145).